A 90-amino-acid polypeptide reads, in one-letter code: Cell division topological specificity factor (90 aa).

Belongs to the MinE family.

Prevents the cell division inhibition by proteins MinC and MinD at internal division sites while permitting inhibition at polar sites. This ensures cell division at the proper site by restricting the formation of a division septum at the midpoint of the long axis of the cell. This chain is Cell division topological specificity factor, found in Lachnoclostridium phytofermentans (strain ATCC 700394 / DSM 18823 / ISDg) (Clostridium phytofermentans).